The primary structure comprises 288 residues: 33 kDa chaperonin (288 aa).

Disulfide bonds link C236/C238 and C269/C272.

The protein belongs to the HSP33 family. Post-translationally, under oxidizing conditions two disulfide bonds are formed involving the reactive cysteines. Under reducing conditions zinc is bound to the reactive cysteines and the protein is inactive.

Its subcellular location is the cytoplasm. Redox regulated molecular chaperone. Protects both thermally unfolding and oxidatively damaged proteins from irreversible aggregation. Plays an important role in the bacterial defense system toward oxidative stress. The chain is 33 kDa chaperonin from Lactococcus lactis subsp. cremoris (strain SK11).